The primary structure comprises 613 residues: Immunoglobulin superfamily member 8 (613 aa).

Residues 1 to 27 (MGALRPTLLPPSLPLLLLLMLGMGCWA) form the signal peptide. Ig-like C2-type domains are found at residues 28–149 (REVL…LRVL), 162–286 (PRGR…WAQI), 303–424 (SQLA…EAAS), and 431–560 (PVHV…WYQA). Residues 28–579 (REVLVPEGPL…VYPYMHALDT (552 aa)) lie on the Extracellular side of the membrane. Cys-49 and Cys-127 form a disulfide bridge. Residue Asn-50 is glycosylated (N-linked (GlcNAc...) asparagine). The segment at 155–174 (VSAAPPGPRGRQAPTSPPRM) is disordered. A disulfide bridge connects residues Cys-186 and Cys-270. The EWI motif motif lies at 274 to 276 (EWI). 2 cysteine pairs are disulfide-bonded: Cys-326/Cys-406 and Cys-462/Cys-544. N-linked (GlcNAc...) asparagine glycans are attached at residues Asn-327 and Asn-463. Ser-518 carries the post-translational modification Phosphoserine. The helical transmembrane segment at 580-600 (LFVPLLVGTGVALVTGATVLG) threads the bilayer. The Cytoplasmic portion of the chain corresponds to 601-613 (TITCCFMKRLRKR). S-palmitoyl cysteine attachment occurs at residues Cys-604 and Cys-605.

Interacts directly with CD82, CD81/tetraspanin-28 and CD9/tetraspanin-29. Also interacts with integrin alpha-3/beta-1 and integrin alpha-4/beta-1. Interacts with HSPA8; this interaction modulates migratory and antigen-presenting capacities of dendritic cells. Expressed in brain, kidney, testis, liver and placenta with moderate expression in all other tissues. Detected on a majority of B-cells, T-cells, and natural killer cells. Expressed on dendritic cells.

The protein localises to the cell membrane. Member of the immunoglobulin superfamily (IgSF) that links tetraspanin-enriched microdomains to the actin cytoskeleton and plays several important roles in innate and adaptive immunity. Acts as an inducible receptor of HSPA8 on dendritic cells to enhance the CCL21/SLC-dependent migration of activated mature dendritic cells while attenuating their antigen-specific stimulatory capacities. In complex with alpha-actinins ACTN1 and ACTN4, regulates actin dynamics in the immune synapse and subsequent T-cell activation. Inhibits the entry of several viruses such as hepatitis C Virus (HCV) or HIV-1. Mechanistically, promotes a change in CD81 organization at the plasma membrane by significantly restricting its diffusion which in turn influences CD81 interaction with Claudin-1/CLDN1, preventing CLDN1 from acting as a co-receptor required for HCV entry. Accumulates at the presynaptic terminal, the producer cell side of the virological synapse, to prevent HIV-1 Env-mediated cell-cell fusion. Highly expressed on malignant cells with antigen presentation defects, interacts with NK receptor KIR3DL2 to suppress NK-cell cytotoxicity. May participate in the regulation of neurite outgrowth and maintenance of the neural network in the adult brain. The protein is Immunoglobulin superfamily member 8 (IGSF8) of Homo sapiens (Human).